Here is an 833-residue protein sequence, read N- to C-terminus: Leucine--tRNA ligase (833 aa).

Residues 41–52 (PYPSGAGLHVGH) carry the 'HIGH' region motif. The 'KMSKS' region motif lies at 610-614 (KMSKS). Lys613 serves as a coordination point for ATP.

The protein belongs to the class-I aminoacyl-tRNA synthetase family.

Its subcellular location is the cytoplasm. The catalysed reaction is tRNA(Leu) + L-leucine + ATP = L-leucyl-tRNA(Leu) + AMP + diphosphate. The polypeptide is Leucine--tRNA ligase (Streptococcus pneumoniae (strain 70585)).